The primary structure comprises 589 residues: Early growth response protein 4 (589 aa).

Disordered regions lie at residues 29 to 101 (GSAL…HSRR), 383 to 411 (AEGL…ASTQ), and 436 to 466 (PGSS…GRRG). The span at 76-86 (PLPPASPPPAR) shows a compositional bias: pro residues. A compositionally biased stretch (basic residues) spans 92 to 101 (ARPRAPHSRR). Positions 395 to 404 (GEGGSSGDGG) are enriched in gly residues. A compositionally biased stretch (pro residues) spans 444 to 454 (PPVPPPPPTPF). 3 consecutive C2H2-type zinc fingers follow at residues 483-507 (FACP…LRIH), 513-535 (FQCR…VRTH), and 541-563 (FACD…SKVH).

It belongs to the EGR C2H2-type zinc-finger protein family.

Its subcellular location is the nucleus. Its function is as follows. Transcriptional regulator. Recognizes and binds to the DNA sequence 5'-GCGGGGGCG-3' (GSG). Activates the transcription of target genes whose products are required for mitogenesis and differentiation. The polypeptide is Early growth response protein 4 (EGR4) (Homo sapiens (Human)).